We begin with the raw amino-acid sequence, 473 residues long: Serine palmitoyltransferase 1 (473 aa).

The Lumenal segment spans residues 1–15 (MATATEQWVLVEMVQ). The interaction with SPTLC2 stretch occupies residues 1–66 (MATATEQWVL…KEELIEEWQP (66 aa)). Residues 16–36 (ALYEAPAYHLILEGILILWII) traverse the membrane as a helical segment. The Cytoplasmic portion of the chain corresponds to 37–473 (RLLFSKTYKL…IKEVAQAVLL (437 aa)). Position 164 is a phosphotyrosine; by ABL (Tyr-164).

Belongs to the class-II pyridoxal-phosphate-dependent aminotransferase family. In terms of assembly, component of the serine palmitoyltransferase (SPT) complex, which is also composed of SPTLC2 or SPTLC3 and SPTSSA or SPTSSB. The heterodimer with SPTLC2 or SPTLC3 forms the catalytic core of the enzyme, while SPTSSA or SPTSSB subunits determine substrate specificity. SPT also interacts with ORMDL proteins, especially ORMDL3, which negatively regulate SPT activity in the presence of ceramides. Forms dimers of heterodimers with SPTLC2. Interacts with RTN4. Pyridoxal 5'-phosphate is required as a cofactor. In terms of processing, phosphorylation at Tyr-164 inhibits activity and promotes cell survival.

The protein localises to the endoplasmic reticulum membrane. The enzyme catalyses L-serine + hexadecanoyl-CoA + H(+) = 3-oxosphinganine + CO2 + CoA. It catalyses the reaction octadecanoyl-CoA + L-serine + H(+) = 3-oxoeicosasphinganine + CO2 + CoA. It carries out the reaction tetradecanoyl-CoA + L-serine + H(+) = 3-oxohexadecasphinganine + CO2 + CoA. The catalysed reaction is dodecanoyl-CoA + L-serine + H(+) = 3-oxotetradecasphinganine + CO2 + CoA. It functions in the pathway lipid metabolism; sphingolipid metabolism. With respect to regulation, SPT complex catalytic activity is negatively regulated by ORMDL proteins, including ORMDL3, in the presence of ceramides. This mechanism allows to maintain ceramide levels at sufficient concentrations for the production of complex sphingolipids, but which prevents the accumulation of ceramides to levels that trigger apoptosis. Functionally, component of the serine palmitoyltransferase multisubunit enzyme (SPT) that catalyzes the initial and rate-limiting step in sphingolipid biosynthesis by condensing L-serine and activated acyl-CoA (most commonly palmitoyl-CoA) to form long-chain bases. The SPT complex is also composed of SPTLC2 or SPTLC3 and SPTSSA or SPTSSB. Within this complex, the heterodimer with SPTLC2 or SPTLC3 forms the catalytic core. The composition of the serine palmitoyltransferase (SPT) complex determines the substrate preference. The SPTLC1-SPTLC2-SPTSSA complex shows a strong preference for C16-CoA substrate, while the SPTLC1-SPTLC3-SPTSSA isozyme uses both C14-CoA and C16-CoA as substrates, with a slight preference for C14-CoA. The SPTLC1-SPTLC2-SPTSSB complex shows a strong preference for C18-CoA substrate, while the SPTLC1-SPTLC3-SPTSSB isozyme displays an ability to use a broader range of acyl-CoAs, without apparent preference. Required for adipocyte cell viability and metabolic homeostasis. In Macaca fascicularis (Crab-eating macaque), this protein is Serine palmitoyltransferase 1 (SPTLC1).